We begin with the raw amino-acid sequence, 390 residues long: Elongation factor Tu 1 (390 aa).

Positions 10–201 (KPHVNVGTIG…LDEYVAVPPR (192 aa)) constitute a tr-type G domain. A G1 region spans residues 19 to 26 (GHVDHGKT). Residue 19–26 (GHVDHGKT) participates in GTP binding. Threonine 26 lines the Mg(2+) pocket. The tract at residues 55–59 (GITIA) is G2. Positions 76–79 (DCPG) are G3. GTP-binding positions include 76-80 (DCPGH) and 131-134 (NKAD). The tract at residues 131-134 (NKAD) is G4. Residues 168–170 (SAL) form a G5 region.

Belongs to the TRAFAC class translation factor GTPase superfamily. Classic translation factor GTPase family. EF-Tu/EF-1A subfamily. Monomer.

Its subcellular location is the cytoplasm. The enzyme catalyses GTP + H2O = GDP + phosphate + H(+). GTP hydrolase that promotes the GTP-dependent binding of aminoacyl-tRNA to the A-site of ribosomes during protein biosynthesis. The sequence is that of Elongation factor Tu 1 from Wolbachia pipientis wMel.